The following is a 348-amino-acid chain: Rhodopsin (348 aa).

Met-1 carries the N-acetylmethionine modification. The Extracellular portion of the chain corresponds to Met-1–Gln-36. N-linked (GlcNAc...) asparagine glycosylation is found at Asn-2 and Asn-15. A helical transmembrane segment spans residues Phe-37–Val-61. The Cytoplasmic portion of the chain corresponds to Thr-62–Asn-73. The chain crosses the membrane as a helical span at residues Tyr-74 to Tyr-96. Over Thr-97–Cys-110 the chain is Extracellular. Cys-110 and Cys-187 are joined by a disulfide. A helical membrane pass occupies residues Asn-111 to Ile-133. Residues Glu-134–Tyr-136 carry the 'Ionic lock' involved in activated form stabilization motif. The Cytoplasmic segment spans residues Glu-134–His-152. Residues Ala-153–Phe-173 form a helical membrane-spanning segment. The Extracellular portion of the chain corresponds to Gly-174–Ser-202. Glu-201 is a Zn(2+) binding site. The helical transmembrane segment at Phe-203 to Gly-224 threads the bilayer. Topologically, residues Gln-225–Arg-252 are cytoplasmic. The chain crosses the membrane as a helical span at residues Met-253–Tyr-274. At Ile-275–Ile-286 the chain is on the extracellular side. Gln-279 contacts Zn(2+). A helical transmembrane segment spans residues Phe-287–Met-308. Position 296 is an N6-(retinylidene)lysine (Lys-296). Residues Met-309–Ala-348 are Cytoplasmic-facing. 2 S-palmitoyl cysteine lipidation sites follow: Cys-322 and Cys-323. Positions Asp-330–Ala-348 are interaction with SAG. Phosphoserine is present on Ser-334. Thr-336 is modified (phosphothreonine). Residue Ser-338 is modified to Phosphoserine. Thr-340 and Thr-342 each carry phosphothreonine. Ser-343 carries the phosphoserine modification.

It belongs to the G-protein coupled receptor 1 family. Opsin subfamily. In terms of assembly, homodimer. May form a complex composed of RHO, GRK1 and RCVRN in a Ca(2+)-dependent manner; RCVRN prevents the interaction between GRK1 and RHO. Interacts with GRK1. Interacts (phosphorylated form) with SAG. Interacts with GNAT1. Interacts with GNAT3. SAG and G-proteins compete for a common binding site. Interacts with PRCD; the interaction promotes PRCD stability. Forms a complex with ASAP1 and ARF4. Forms a complex with ASAP1, RAB11A, Rabin8/RAB3IP, ARF4 and RAB11FIP3; the complex regulates Golgi-to-cilia rhodopsin/RHO transport in photoreceptors. In terms of processing, phosphorylated on some or all of the serine and threonine residues present in the C-terminal region. Post-translationally, contains one covalently linked retinal chromophore. Upon light absorption, the covalently bound 11-cis-retinal is converted to all-trans-retinal. After hydrolysis of the Schiff base and release of the covalently bound all-trans-retinal, active rhodopsin is regenerated by binding of a fresh molecule of 11-cis-retinal.

Its subcellular location is the membrane. The protein localises to the cell projection. It is found in the cilium. It localises to the photoreceptor outer segment. In terms of biological role, photoreceptor required for image-forming vision at low light intensity. Required for photoreceptor cell viability after birth. Light-induced isomerization of 11-cis to all-trans retinal triggers a conformational change that activates signaling via G-proteins. Subsequent receptor phosphorylation mediates displacement of the bound G-protein alpha subunit by the arrestin SAG and terminates signaling. The chain is Rhodopsin (RHO) from Macaca fascicularis (Crab-eating macaque).